A 253-amino-acid chain; its full sequence is Methionine aminopeptidase A (253 aa).

Histidine 80 is a substrate binding site. Residues aspartate 98, aspartate 109, and histidine 172 each coordinate a divalent metal cation. Position 179 (histidine 179) interacts with substrate. A divalent metal cation-binding residues include glutamate 205 and glutamate 236.

This sequence belongs to the peptidase M24A family. Methionine aminopeptidase type 1 subfamily. Monomer. The cofactor is Co(2+). Zn(2+) serves as cofactor. Requires Mn(2+) as cofactor. Fe(2+) is required as a cofactor.

It carries out the reaction Release of N-terminal amino acids, preferentially methionine, from peptides and arylamides.. Its function is as follows. Removes the N-terminal methionine from nascent proteins. The N-terminal methionine is often cleaved when the second residue in the primary sequence is small and uncharged (Met-Ala-, Cys, Gly, Pro, Ser, Thr, or Val). Requires deformylation of the N(alpha)-formylated initiator methionine before it can be hydrolyzed. This Synechocystis sp. (strain ATCC 27184 / PCC 6803 / Kazusa) protein is Methionine aminopeptidase A.